A 683-amino-acid polypeptide reads, in one-letter code: Acetyl-coenzyme A synthetase 2 (683 aa).

CoA contacts are provided by residues 207–210 (RGGK) and T326. Residues 402–404 (GEP), 426–431 (DTFWQT), D517, and R532 each bind ATP. S540 is a CoA binding site. ATP is bound at residue R543. R613 contributes to the CoA binding site.

This sequence belongs to the ATP-dependent AMP-binding enzyme family.

The enzyme catalyses acetate + ATP + CoA = acetyl-CoA + AMP + diphosphate. This Candida glabrata (strain ATCC 2001 / BCRC 20586 / JCM 3761 / NBRC 0622 / NRRL Y-65 / CBS 138) (Yeast) protein is Acetyl-coenzyme A synthetase 2 (ACS2).